The chain runs to 380 residues: Kappa-type opioid receptor (380 aa).

Residues 1–57 lie on the Extracellular side of the membrane; the sequence is MDSPIQIFRGEPGPTCAPSACLPPNSSAWFPGWAEPDSNGSAGSEDAQLEPAHISPA. 2 N-linked (GlcNAc...) asparagine glycosylation sites follow: Asn-25 and Asn-39. A helical membrane pass occupies residues 58 to 85; sequence IPVIITAVYSVVFVVGLVGNSLVMFVII. The Cytoplasmic portion of the chain corresponds to 86–95; it reads RYTKMKTATN. A helical transmembrane segment spans residues 96 to 119; the sequence is IYIFNLALADALVTTTMPFQSTVY. The Extracellular portion of the chain corresponds to 120–132; the sequence is LMNSWPFGDVLCK. Residues Cys-131 and Cys-210 are joined by a disulfide bond. The chain crosses the membrane as a helical span at residues 133-154; sequence IVISIDYYNMFTSIFTLTMMSV. At 155–173 the chain is on the cytoplasmic side; it reads DRYIAVCHPVKALDFRTPL. A helical membrane pass occupies residues 174–196; the sequence is KAKIINICIWLLSSSVGISAIVL. At 197-222 the chain is on the extracellular side; sequence GGTKVREDVDVIECSLQFPDDDYSWW. A helical transmembrane segment spans residues 223 to 247; it reads DLFMKICVFIFAFVIPVLIIIVCYT. At 248–274 the chain is on the cytoplasmic side; the sequence is LMILRLKSVRLLSGSREKDRNLRRITR. The helical transmembrane segment at 275–296 threads the bilayer; that stretch reads LVLVVVAVFVVCWTPIHIFILV. Over 297–311 the chain is Extracellular; it reads EALGSTSHSTAALSS. Residues 312–333 form a helical membrane-spanning segment; that stretch reads YYFCIALGYTNSSLNPILYAFL. The Cytoplasmic segment spans residues 334-380; it reads DENFKRCFRDFCFPLKMRMERQSTSRVRNTVQDPAYLRDIDGMNKPV. A lipid anchor (S-palmitoyl cysteine) is attached at Cys-345.

This sequence belongs to the G-protein coupled receptor 1 family. As to quaternary structure, interacts with NHERF1. Interacts with GABARAPL1. As to expression, detected in brain and placenta.

The protein localises to the cell membrane. In terms of biological role, G-protein coupled opioid receptor that functions as a receptor for endogenous alpha-neoendorphins and dynorphins, but has low affinity for beta-endorphins. Also functions as a receptor for various synthetic opioids and for the psychoactive diterpene salvinorin A. Ligand binding causes a conformation change that triggers signaling via guanine nucleotide-binding proteins (G proteins) and modulates the activity of down-stream effectors, such as adenylate cyclase. Signaling leads to the inhibition of adenylate cyclase activity. Inhibits neurotransmitter release by reducing calcium ion currents and increasing potassium ion conductance. Plays a role in the perception of pain. Plays a role in mediating reduced physical activity upon treatment with synthetic opioids. Plays a role in the regulation of salivation in response to synthetic opioids. May play a role in arousal and regulation of autonomic and neuroendocrine functions. The chain is Kappa-type opioid receptor (OPRK1) from Homo sapiens (Human).